The following is a 367-amino-acid chain: tRNA-specific 2-thiouridylase MnmA (367 aa).

ATP is bound by residues 12 to 19 (GMSGGVDS) and M38. Residues 98–100 (NPD) are interaction with target base in tRNA. The active-site Nucleophile is C103. The cysteines at positions 103 and 200 are disulfide-linked. G128 contributes to the ATP binding site. Residues 150–152 (KDQ) are interaction with tRNA. The Cysteine persulfide intermediate role is filled by C200. The interaction with tRNA stretch occupies residues 312-313 (RY).

Belongs to the MnmA/TRMU family. Interacts with TusE.

The protein localises to the cytoplasm. The enzyme catalyses S-sulfanyl-L-cysteinyl-[protein] + uridine(34) in tRNA + AH2 + ATP = 2-thiouridine(34) in tRNA + L-cysteinyl-[protein] + A + AMP + diphosphate + H(+). Catalyzes the 2-thiolation of uridine at the wobble position (U34) of tRNA(Lys), tRNA(Glu) and tRNA(Gln), leading to the formation of s(2)U34, the first step of tRNA-mnm(5)s(2)U34 synthesis. Sulfur is provided by IscS, via a sulfur-relay system. Binds ATP and its substrate tRNAs. The protein is tRNA-specific 2-thiouridylase MnmA of Photorhabdus laumondii subsp. laumondii (strain DSM 15139 / CIP 105565 / TT01) (Photorhabdus luminescens subsp. laumondii).